Here is a 1692-residue protein sequence, read N- to C-terminus: Fatty acid synthase alpha subunit hexA (1692 aa).

Residues 44 to 80 (AVEEPVDETPAPETAPERPPLSRAKTAAVKPQETAAP) form a disordered region. One can recognise a Carrier domain in the interval 90–174 (LSAEEIVRAL…RVSSALLSKL (85 aa)). Residue serine 125 is modified to O-(pantetheine 4'-phosphoryl)serine. The segment at 508-746 (FAGKNILITG…IAMLMTPELV (239 aa)) is ketoreductase (KR) domain. In terms of domain architecture, Ketosynthase family 3 (KS3) spans 948-1430 (KEYLHEVAVE…QKGGQVVGVA (483 aa)). Residue cysteine 1135 is the For beta-ketoacyl synthase activity of the active site. Residues 1263–1287 (GQAQLDKSSPSTNTTSRTSSVSLAR) are disordered. Positions 1270 to 1284 (SSPSTNTTSRTSSVS) are enriched in low complexity. Catalysis depends on for beta-ketoacyl synthase activity residues histidine 1315 and histidine 1356. Mg(2+) is bound at residue aspartate 1569. Acetyl-CoA is bound by residues 1569–1571 (DLV), 1615–1625 (EAVFKCLHTQT), 1639–1642 (KSDN), and 1668–1670 (ISH). A Mg(2+)-binding site is contributed by serine 1669.

The protein belongs to the thiolase-like superfamily. Fungal fatty acid synthetase subunit alpha family. [Alpha(6)beta(6)] hexamers of two multifunctional subunits (alpha and beta). Post-translationally, 4'-phosphopantetheine is transferred from CoA to a specific serine of the acyl carrier domain by the C-terminal PPT domain. This modification is essential for activity because fatty acids are bound in thioester linkage to the sulfhydryl of the prosthetic group.

It carries out the reaction acetyl-CoA + n malonyl-CoA + 2n NADPH + 4n H(+) = a long-chain-acyl-CoA + n CoA + n CO2 + 2n NADP(+).. It catalyses the reaction a fatty acyl-[ACP] + malonyl-[ACP] + H(+) = a 3-oxoacyl-[ACP] + holo-[ACP] + CO2. The catalysed reaction is a (3R)-hydroxyacyl-[ACP] + NADP(+) = a 3-oxoacyl-[ACP] + NADPH + H(+). Its pathway is mycotoxin biosynthesis. Fatty acid synthase alpha subunit; part of the fragmented gene cluster that mediates the biosynthesis of dothistromin (DOTH), a polyketide toxin very similar in structure to the aflatoxin precursor, versicolorin B. The first step of the pathway is the conversion of acetate to norsolorinic acid (NOR) and requires the fatty acid synthase subunits hexA and hexB, as well as the polyketide synthase pksA. PksA combines a hexanoyl starter unit and 7 malonyl-CoA extender units to synthesize the precursor NOR. The hexanoyl starter unit is provided to the acyl-carrier protein (ACP) domain by the fungal fatty acid synthase hexA/hexB. The second step is the conversion of NOR to averantin (AVN) and requires the norsolorinic acid ketoreductase nor1, which catalyzes the dehydration of norsolorinic acid to form (1'S)-averantin. The cytochrome P450 monooxygenase avnA then catalyzes the hydroxylation of AVN to 5'hydroxyaverantin (HAVN). The next step is performed by adhA that transforms HAVN to averufin (AVF). Averufin might then be converted to hydroxyversicolorone by cypX and avfA. Hydroxyversicolorone is further converted versiconal hemiacetal acetate (VHA) by moxY. VHA is then the substrate for the versiconal hemiacetal acetate esterase est1 to yield versiconal (VAL). Versicolorin B synthase vbsA then converts VAL to versicolorin B (VERB) by closing the bisfuran ring. Then, the activity of the versicolorin B desaturase verB leads to versicolorin A (VERA). DotB, a predicted chloroperoxidase, may perform epoxidation of the A-ring of VERA. Alternatively, a cytochrome P450, such as cypX or avnA could catalyze this step. It is also possible that another, uncharacterized, cytochrome P450 enzyme is responsible for this step. Opening of the epoxide could potentially be achieved by the epoxide hydrolase epoA. However, epoA seems not to be required for DOTH biosynthesis, but other epoxide hydrolases may have the ability to complement this hydrolysis. Alternatively, opening of the epoxide ring could be achieved non-enzymatically. The next step is the deoxygenation of ring A to yield the 5,8-dihydroxyanthraquinone which is most likely catalyzed by the NADPH dehydrogenase encoded by ver1. The last stages of DOTH biosynthesis are proposed to involve hydroxylation of the bisfuran. OrdB and norB might have oxidative roles here. An alternative possibility is that cytochrome P450 monoogenases such as avnA and cypX might perform these steps in addition to previously proposed steps. The chain is Fatty acid synthase alpha subunit hexA from Dothistroma septosporum (strain NZE10 / CBS 128990) (Red band needle blight fungus).